The following is a 337-amino-acid chain: Anthranilate phosphoribosyltransferase (337 aa).

5-phospho-alpha-D-ribose 1-diphosphate contacts are provided by residues glycine 81, 84–85 (GD), serine 89, 91–94 (NVST), 109–117 (KHGNRAATS), and alanine 121. An anthranilate-binding site is contributed by glycine 81. A Mg(2+)-binding site is contributed by serine 93. Asparagine 112 lines the anthranilate pocket. Arginine 167 lines the anthranilate pocket. Residues aspartate 226 and glutamate 227 each coordinate Mg(2+).

Belongs to the anthranilate phosphoribosyltransferase family. Homodimer. The cofactor is Mg(2+).

The enzyme catalyses N-(5-phospho-beta-D-ribosyl)anthranilate + diphosphate = 5-phospho-alpha-D-ribose 1-diphosphate + anthranilate. It participates in amino-acid biosynthesis; L-tryptophan biosynthesis; L-tryptophan from chorismate: step 2/5. Catalyzes the transfer of the phosphoribosyl group of 5-phosphorylribose-1-pyrophosphate (PRPP) to anthranilate to yield N-(5'-phosphoribosyl)-anthranilate (PRA). The polypeptide is Anthranilate phosphoribosyltransferase (Methylorubrum populi (strain ATCC BAA-705 / NCIMB 13946 / BJ001) (Methylobacterium populi)).